Consider the following 227-residue polypeptide: Ribosomal RNA large subunit methyltransferase E (227 aa).

5 residues coordinate S-adenosyl-L-methionine: G78, W80, D103, D119, and D143. The active-site Proton acceptor is K183.

This sequence belongs to the class I-like SAM-binding methyltransferase superfamily. RNA methyltransferase RlmE family.

It localises to the cytoplasm. The catalysed reaction is uridine(2552) in 23S rRNA + S-adenosyl-L-methionine = 2'-O-methyluridine(2552) in 23S rRNA + S-adenosyl-L-homocysteine + H(+). Specifically methylates the uridine in position 2552 of 23S rRNA at the 2'-O position of the ribose in the fully assembled 50S ribosomal subunit. This is Ribosomal RNA large subunit methyltransferase E from Rickettsia bellii (strain RML369-C).